The chain runs to 158 residues: uncharacterized protein (158 aa).

An N-terminal signal peptide occupies residues Met1–Ser30.

This is an uncharacterized protein from Streptococcus pneumoniae serotype 2 (strain D39 / NCTC 7466).